The primary structure comprises 335 residues: Transcription factor bHLH63 (335 aa).

The tract at residues 110-160 (MTMNRDDLVEEGEEEKSKITEQNNGSTKSIKKMKHKAKKEENNFSNDSSKV) is disordered. The bHLH domain occupies 178-228 (QATDSHSIAERVRREKISERMKFLQDLVPGCDKITGKAGMLDEIINYVQSL).

As to quaternary structure, homodimer. Interacts with IBH1. Binds reversibly to CRY2 after blue light illumination. As to expression, expressed constitutively in roots, leaves, and stems.

The protein localises to the nucleus. Functionally, transcription factor that binds DNA to G box 5'-CACGTG-3' and, to a lower extent, to E-box 5'-CANNTG-3' in vitro. Binds to chromatin DNA of the FT gene and promotes its expression, and thus triggers flowering in response to blue light. The chain is Transcription factor bHLH63 (BHLH63) from Arabidopsis thaliana (Mouse-ear cress).